Here is a 404-residue protein sequence, read N- to C-terminus: Calcium/calmodulin-dependent protein kinase cmkB (404 aa).

In terms of domain architecture, Protein kinase spans 18-279 (YKTGKTLGAG…AHQALQHPWI (262 aa)). ATP contacts are provided by residues 24–32 (LGAGLYSVV) and Lys-47. The active-site Proton acceptor is the Asp-141. A Phosphothreonine; by cmkC modification is found at Thr-179. Residues 279-322 (INPPYDTTDDLGSGEDLLPNIKKNFNARRTLHKAIDTVRAINKL) are autoinhibitory domain. Residues 301 to 323 (KNFNARRTLHKAIDTVRAINKLR) are calmodulin-binding. Residues 336–404 (VDPKPEHVNG…WSRTAPRSER (69 aa)) form a disordered region. Basic and acidic residues-rich tracts occupy residues 338 to 370 (PKPE…DSRS) and 379 to 389 (QIREQERKVKE).

Belongs to the protein kinase superfamily. CAMK Ser/Thr protein kinase family. CaMK subfamily. In terms of processing, phosphorylated by cmkC on Thr-179.

It catalyses the reaction L-seryl-[protein] + ATP = O-phospho-L-seryl-[protein] + ADP + H(+). The enzyme catalyses L-threonyl-[protein] + ATP = O-phospho-L-threonyl-[protein] + ADP + H(+). Activated by Ca(2+)/calmodulin. Binding of calmodulin results in conformational change that relieves intrasteric autoinhibition and allows phosphorylation of Thr-179 within the activation loop by cmkC. Its function is as follows. Calcium/calmodulin-dependent protein kinase that operates in the calcium-triggered CaMKK-CaMK1 signaling cascade. Required in G1-phase of the cell cycle for proper timing of the initial nuclear division after germination, but not for subsequent mitoses. Required for the normal temporal regulation of nimX activity. This Emericella nidulans (Aspergillus nidulans) protein is Calcium/calmodulin-dependent protein kinase cmkB.